A 444-amino-acid chain; its full sequence is 3-phosphoshikimate 1-carboxyvinyltransferase (444 aa).

The 3-phosphoshikimate site is built by lysine 29, serine 30, and arginine 34. Phosphoenolpyruvate is bound at residue lysine 29. 2 residues coordinate phosphoenolpyruvate: glycine 103 and arginine 132. The 3-phosphoshikimate site is built by serine 177, glutamine 179, aspartate 329, and lysine 356. Glutamine 179 serves as a coordination point for phosphoenolpyruvate. Aspartate 329 acts as the Proton acceptor in catalysis. Phosphoenolpyruvate contacts are provided by arginine 360 and arginine 402.

This sequence belongs to the EPSP synthase family. As to quaternary structure, monomer.

The protein localises to the cytoplasm. It carries out the reaction 3-phosphoshikimate + phosphoenolpyruvate = 5-O-(1-carboxyvinyl)-3-phosphoshikimate + phosphate. It participates in metabolic intermediate biosynthesis; chorismate biosynthesis; chorismate from D-erythrose 4-phosphate and phosphoenolpyruvate: step 6/7. In terms of biological role, catalyzes the transfer of the enolpyruvyl moiety of phosphoenolpyruvate (PEP) to the 5-hydroxyl of shikimate-3-phosphate (S3P) to produce enolpyruvyl shikimate-3-phosphate and inorganic phosphate. This Prochlorococcus marinus (strain NATL2A) protein is 3-phosphoshikimate 1-carboxyvinyltransferase.